A 279-amino-acid polypeptide reads, in one-letter code: MYDLTGKHVCYVADCGGIALETSKVLMTKNIAKLAILQSVENQPAIARLQSIKHSTQIFFWTFDVTMARQEMKKYFDEVMVQMDYIDVLINGATLCDERNIDATINTNLTGMMNTVATVLPYMDRKMGGSGGLIVNVTSVIGLDPSPVFCAYSASKFGVIGFTRSLADPLYYTQNGVAVMAVCCGPTKVFVDRELNAFLEYGQTFADRLRRAPCQSTAVCGQNIVTAIERSENGQIWIADKGGLELLTLHWYWHMADQFLSYMQSTDDENQEQFVSGQR.

11–34 is a binding site for NAD(+); it reads YVADCGGIALETSKVLMTKNIAKL. Serine 139 contacts substrate. Tyrosine 152 acts as the Proton acceptor in catalysis.

It belongs to the short-chain dehydrogenases/reductases (SDR) family.

This Drosophila subobscura (Fruit fly) protein is Alcohol dehydrogenase-related 31 kDa protein (Adhr).